The following is a 304-amino-acid chain: Thymidylate synthase (304 aa).

DUMP is bound by residues Arg30 and 157 to 158 (RR). Residue Cys177 is the Nucleophile of the active site. DUMP contacts are provided by residues 206-209 (RSCD), Asn217, and 247-249 (HVY). Asp209 is a (6R)-5,10-methylene-5,6,7,8-tetrahydrofolate binding site.

Belongs to the thymidylate synthase family. Homodimer.

It is found in the nucleus. The catalysed reaction is dUMP + (6R)-5,10-methylene-5,6,7,8-tetrahydrofolate = 7,8-dihydrofolate + dTMP. It functions in the pathway pyrimidine metabolism; dTTP biosynthesis. Inhibited by 5-fluoro-2'-deoxyuridine 5'-monophosphate (FdUMP). Functionally, thymidylate synthase required for de novo biosynthesis of pyrimidine deoxyribonucleotides. Required for both nuclear and mitochondrial DNA synthesis. This Saccharomyces cerevisiae (strain ATCC 204508 / S288c) (Baker's yeast) protein is Thymidylate synthase (CDC21).